The primary structure comprises 771 residues: Carnitine O-palmitoyltransferase 1, muscle isoform (771 aa).

The Cytoplasmic portion of the chain corresponds to 1 to 47; it reads MAEAHQAVAFQFTVTPEGVDFQLSREVLKHIYLSVIRSWKKRLIRIK. The helical transmembrane segment at 48–73 threads the bilayer; the sequence is NGILRGVYPGSPTSWLVVVMATAGSS. Residues 74-101 lie on the Mitochondrial intermembrane side of the membrane; it reads YYNVDISMGLVYYIQRWLPEGRPYRTPY. The helical transmembrane segment at 102 to 121 threads the bilayer; sequence TRTLFSMAIFSTGVWMMGIF. The Cytoplasmic portion of the chain corresponds to 122 to 771; it reads FFRQTLKLLL…NLFQVPKADG (650 aa). Residue His472 is the Proton acceptor of the active site. Residue 554–566 coordinates CoA; sequence GKGLIKKCRTSPD. (R)-carnitine is bound by residues Tyr588 and Thr601.

The protein belongs to the carnitine/choline acetyltransferase family.

It is found in the mitochondrion outer membrane. The catalysed reaction is (R)-carnitine + hexadecanoyl-CoA = O-hexadecanoyl-(R)-carnitine + CoA. The protein operates within lipid metabolism; fatty acid beta-oxidation. Its function is as follows. Catalyzes the transfer of the acyl group of long-chain fatty acid-CoA conjugates onto carnitine, an essential step for the mitochondrial uptake of long-chain fatty acids and their subsequent beta-oxidation in the mitochondrion. This is Carnitine O-palmitoyltransferase 1, muscle isoform (CPT1B) from Bos taurus (Bovine).